A 207-amino-acid polypeptide reads, in one-letter code: Cytochrome c biogenesis ATP-binding export protein CcmA (207 aa).

One can recognise an ABC transporter domain in the interval 4–207 (LEARELLCER…RISLTQTGAA (204 aa)). Residue 36–43 (GSNGAGKT) participates in ATP binding.

It belongs to the ABC transporter superfamily. CcmA exporter (TC 3.A.1.107) family. The complex is composed of two ATP-binding proteins (CcmA) and two transmembrane proteins (CcmB).

It is found in the cell inner membrane. It carries out the reaction heme b(in) + ATP + H2O = heme b(out) + ADP + phosphate + H(+). In terms of biological role, part of the ABC transporter complex CcmAB involved in the biogenesis of c-type cytochromes; once thought to export heme, this seems not to be the case, but its exact role is uncertain. Responsible for energy coupling to the transport system. This chain is Cytochrome c biogenesis ATP-binding export protein CcmA, found in Escherichia coli (strain UTI89 / UPEC).